Here is a 106-residue protein sequence, read N- to C-terminus: Colipase A (106 aa).

A signal peptide spans 1–11 (LLLVALAVAYA). Positions 12 to 16 (VPDPR) are cleaved as a propeptide — enterostatin, activation peptide. Intrachain disulfides connect Cys28–Cys39, Cys34–Cys50, Cys38–Cys72, Cys60–Cys80, and Cys74–Cys98. Trp63 contacts taurodeoxycholate.

Belongs to the colipase family. In terms of assembly, forms a 1:1 stoichiometric complex with pancreatic lipase. In terms of tissue distribution, expressed by the pancreas.

The protein localises to the secreted. In terms of biological role, colipase is a cofactor of pancreatic lipase. It allows the lipase to anchor itself to the lipid-water interface. Without colipase the enzyme is washed off by bile salts, which have an inhibitory effect on the lipase. Its function is as follows. Enterostatin has a biological activity as a satiety signal. This is Colipase A (CLPS1) from Equus caballus (Horse).